Consider the following 208-residue polypeptide: Outer-membrane lipoprotein carrier protein (208 aa).

An N-terminal signal peptide occupies residues 1–22; it reads MLKPLSQLVCALPLVVAASSYA.

Belongs to the LolA family. Monomer.

The protein resides in the periplasm. In terms of biological role, participates in the translocation of lipoproteins from the inner membrane to the outer membrane. Only forms a complex with a lipoprotein if the residue after the N-terminal Cys is not an aspartate (The Asp acts as a targeting signal to indicate that the lipoprotein should stay in the inner membrane). The polypeptide is Outer-membrane lipoprotein carrier protein (Shewanella loihica (strain ATCC BAA-1088 / PV-4)).